Here is a 154-residue protein sequence, read N- to C-terminus: Peptide methionine sulfoxide reductase MsrB (154 aa).

Residues 28 to 150 (DQQWREQLSE…NSVSLIFNKI (123 aa)) enclose the MsrB domain. Zn(2+)-binding residues include cysteine 67, cysteine 70, cysteine 116, and cysteine 119. The active-site Nucleophile is the cysteine 139.

Belongs to the MsrB Met sulfoxide reductase family. Zn(2+) serves as cofactor.

It carries out the reaction L-methionyl-[protein] + [thioredoxin]-disulfide + H2O = L-methionyl-(R)-S-oxide-[protein] + [thioredoxin]-dithiol. This is Peptide methionine sulfoxide reductase MsrB from Vibrio vulnificus (strain CMCP6).